A 251-amino-acid chain; its full sequence is CDP-diacylglycerol pyrophosphatase (251 aa).

Residues 4 to 24 (AGLLFLVMIVIAVVAAGIGYW) form a helical membrane-spanning segment.

It belongs to the Cdh family.

It localises to the cell inner membrane. The catalysed reaction is a CDP-1,2-diacyl-sn-glycerol + H2O = a 1,2-diacyl-sn-glycero-3-phosphate + CMP + 2 H(+). The protein operates within phospholipid metabolism; CDP-diacylglycerol degradation; phosphatidate from CDP-diacylglycerol: step 1/1. The sequence is that of CDP-diacylglycerol pyrophosphatase from Escherichia coli O81 (strain ED1a).